Here is a 312-residue protein sequence, read N- to C-terminus: Non-structural protein 12A (312 aa).

Positions 1 to 23 (MFKSGSGSLKRSGSISSVKSFSG) are enriched in low complexity. Disordered regions lie at residues 1–37 (MFKS…RGSV), 62–99 (FVPE…QNAD), and 111–161 (ESSK…GTGD). Positions 63-77 (VPEKTKSEGNLKDKS) are enriched in basic and acidic residues. A compositionally biased stretch (polar residues) spans 78–98 (SVITGNFGSSGPINAHTNQNA). A compositionally biased stretch (basic and acidic residues) spans 122 to 134 (DARHTATDSRLSQ).

It belongs to the phytoreovirus non-structural protein Pns12A family.

The protein resides in the host cytoplasm. Functionally, constituent of viral factories. Binds to ssRNA and dsRNA. In Alopecurus aequalis (Barnyard grass), this protein is Non-structural protein 12A.